We begin with the raw amino-acid sequence, 325 residues long: 4-hydroxy-3-methylbut-2-enyl diphosphate reductase (325 aa).

Residue Cys-13 coordinates [4Fe-4S] cluster. The (2E)-4-hydroxy-3-methylbut-2-enyl diphosphate site is built by His-42 and His-76. Positions 42 and 76 each coordinate dimethylallyl diphosphate. Isopentenyl diphosphate contacts are provided by His-42 and His-76. Cys-98 is a binding site for [4Fe-4S] cluster. Position 126 (His-126) interacts with (2E)-4-hydroxy-3-methylbut-2-enyl diphosphate. His-126 contacts dimethylallyl diphosphate. Residue His-126 participates in isopentenyl diphosphate binding. The Proton donor role is filled by Glu-128. (2E)-4-hydroxy-3-methylbut-2-enyl diphosphate is bound at residue Thr-169. Residue Cys-230 coordinates [4Fe-4S] cluster. Positions 258, 259, 260, and 306 each coordinate (2E)-4-hydroxy-3-methylbut-2-enyl diphosphate. Positions 258, 259, 260, and 306 each coordinate dimethylallyl diphosphate. Residues Ser-258, Ser-259, Asn-260, and Ser-306 each coordinate isopentenyl diphosphate.

This sequence belongs to the IspH family. It depends on [4Fe-4S] cluster as a cofactor.

The catalysed reaction is isopentenyl diphosphate + 2 oxidized [2Fe-2S]-[ferredoxin] + H2O = (2E)-4-hydroxy-3-methylbut-2-enyl diphosphate + 2 reduced [2Fe-2S]-[ferredoxin] + 2 H(+). It carries out the reaction dimethylallyl diphosphate + 2 oxidized [2Fe-2S]-[ferredoxin] + H2O = (2E)-4-hydroxy-3-methylbut-2-enyl diphosphate + 2 reduced [2Fe-2S]-[ferredoxin] + 2 H(+). The protein operates within isoprenoid biosynthesis; dimethylallyl diphosphate biosynthesis; dimethylallyl diphosphate from (2E)-4-hydroxy-3-methylbutenyl diphosphate: step 1/1. It participates in isoprenoid biosynthesis; isopentenyl diphosphate biosynthesis via DXP pathway; isopentenyl diphosphate from 1-deoxy-D-xylulose 5-phosphate: step 6/6. Functionally, catalyzes the conversion of 1-hydroxy-2-methyl-2-(E)-butenyl 4-diphosphate (HMBPP) into a mixture of isopentenyl diphosphate (IPP) and dimethylallyl diphosphate (DMAPP). Acts in the terminal step of the DOXP/MEP pathway for isoprenoid precursor biosynthesis. The protein is 4-hydroxy-3-methylbut-2-enyl diphosphate reductase of Chlorobium phaeobacteroides (strain BS1).